A 683-amino-acid chain; its full sequence is Solute carrier family 28 member 3 (683 aa).

The interval 1-71 (MSAFKARGVE…EEEEEGEEDQ (71 aa)) is disordered. At 1-97 (MSAFKARGVE…FYKRNKKIIH (97 aa)) the chain is on the cytoplasmic side. The segment covering 60-71 (DNEEEEEGEEDQ) has biased composition (acidic residues). The helical transmembrane segment at 98 to 118 (YTFLGLLLVGYFALVIAACIV) threads the bilayer. At 119 to 123 (NFKQS) the chain is on the extracellular side. A helical membrane pass occupies residues 124–144 (LALLVLTLIAIFFFFWDLFIA). At 145–168 (KYGDKIAEALKPCQKFLDNHWSII) the chain is on the cytoplasmic side. The chain crosses the membrane as a helical span at residues 169–189 (RWFVYGALLLAVILWLTLDTA). The Extracellular segment spans residues 190 to 192 (KRG). The helical transmembrane segment at 193 to 214 (ANQVIPFFGLILYILLVFIFSK) threads the bilayer. Topologically, residues 215–222 (HPTKVRWR) are cytoplasmic. The chain crosses the membrane as a helical span at residues 223–242 (IVIWGLLLQFIFGLIILRTK). The Extracellular segment spans residues 243-279 (PGLDAFNWLGIQVQTFLKYTDAGSRFLFGDDFQDHFF). A helical membrane pass occupies residues 280–300 (AFAVLPIVIFFSTVMSMMYYL). Over 301 to 324 (GLMQWLILKVGWLMQITMGTSPME) the chain is Cytoplasmic. The segment at residues 325–343 (SMVSAGNIFVGQTESPLLI) is an intramembrane region (helical). The Cytoplasmic segment spans residues 344 to 356 (RPYLADLTISEMH). A helical transmembrane segment spans residues 357-379 (SVMSSGFATIAGSVLGAYISLGI). Residues 380 to 381 (PA) are Extracellular-facing. Residues 382–403 (AHLLTASVMSAPAALAISKTFW) traverse the membrane as a helical segment. Residues 404–438 (PETKKSKNSTQTSIKLEKGQENNLVEAASQGASAA) lie on the Cytoplasmic side of the membrane. A helical membrane pass occupies residues 439–464 (VPLVANIAANLIAFLAVLAFINATLS). Topologically, residues 465 to 502 (WLGSMFNYPQFSFEIICSYVLMPFAFMMGVNYDDSFLV) are extracellular. The helical intramembrane region spans 503 to 522 (AELLGMKTFFNEFVAYQRLS). At 523 to 561 (EYIHNRESGGPLFVDGVRQYMSVRSEAIATYALCGFANF) the chain is on the extracellular side. Residues 562–572 (GSLGIMIGGLS) traverse the membrane as a helical segment. The Cytoplasmic portion of the chain corresponds to 573 to 585 (SLAPHRKSDIASC). A helical transmembrane segment spans residues 586–608 (GIRALIAGTIACFSTACIAGVLY). The Extracellular segment spans residues 609–683 (IPELYCPNLL…GFNCSEVRPE (75 aa)).

It belongs to the concentrative nucleoside transporter (CNT) (TC 2.A.41) family. As to quaternary structure, homotrimer.

Its subcellular location is the cell membrane. The enzyme catalyses thymidine(out) + 2 Na(+)(out) = thymidine(in) + 2 Na(+)(in). It catalyses the reaction cytidine(out) + 2 Na(+)(out) = cytidine(in) + 2 Na(+)(in). The catalysed reaction is uridine(out) + 2 Na(+)(out) = uridine(in) + 2 Na(+)(in). It carries out the reaction adenosine(out) + 2 Na(+)(out) = adenosine(in) + 2 Na(+)(in). The enzyme catalyses guanosine(out) + 2 Na(+)(out) = guanosine(in) + 2 Na(+)(in). It catalyses the reaction inosine(out) + 2 Na(+)(out) = inosine(in) + 2 Na(+)(in). Its function is as follows. Sodium-dependent, pyrimidine- and purine-selective. Involved in the homeostasis of endogenous nucleosides. Exhibits the transport characteristics of the nucleoside transport system cib or N3 subtype (N3/cib) (with marked transport of both thymidine and inosine). Employs a 2:1 sodium/nucleoside ratio. Also able to transport gemcitabine, 3'-azido-3'-deoxythymidine (AZT), ribavirin and 3-deazauridine. The protein is Solute carrier family 28 member 3 (SLC28A3) of Eptatretus stoutii (Pacific hagfish).